A 102-amino-acid chain; its full sequence is Urease subunit beta (102 aa).

This sequence belongs to the urease beta subunit family. As to quaternary structure, heterotrimer of UreA (gamma), UreB (beta) and UreC (alpha) subunits. Three heterotrimers associate to form the active enzyme.

It is found in the cytoplasm. The catalysed reaction is urea + 2 H2O + H(+) = hydrogencarbonate + 2 NH4(+). Its pathway is nitrogen metabolism; urea degradation; CO(2) and NH(3) from urea (urease route): step 1/1. The polypeptide is Urease subunit beta (Acinetobacter baumannii (strain AB307-0294)).